A 90-amino-acid chain; its full sequence is Small cysteine-rich outer membrane protein OmcA (90 aa).

A signal peptide spans 1 to 19; it reads MKKAVLIAAMFCGVVSLSS. Cys20 carries N-palmitoyl cysteine lipidation. Residue Cys20 is the site of S-diacylglycerol cysteine attachment. The segment at 69 to 90 is disordered; that stretch reads TECNSQSPQVKGCTSPDGRCKQ.

As to quaternary structure, part of a disulfide cross-linked outer membrane complex (COMC) composed of the major outer membrane porin (MOMP), the small cysteine-rich protein (OmcA) and the large cysteine-rich periplasmic protein (OmcB).

The protein localises to the cell outer membrane. Functionally, in elementary bodies (EBs, the infectious stage, which is able to survive outside the host cell) provides the structural integrity of the outer envelope through disulfide cross-links with the large cysteine-rich periplasmic protein and the major outer membrane porin. It has been described in publications as the Sarkosyl-insoluble COMC (Chlamydia outer membrane complex), and serves as the functional equivalent of peptidoglycan. This Chlamydia pneumoniae (Chlamydophila pneumoniae) protein is Small cysteine-rich outer membrane protein OmcA (omcA).